The following is a 105-amino-acid chain: UPF0148 protein PYRAB12700 (105 aa).

This sequence belongs to the UPF0148 family.

The polypeptide is UPF0148 protein PYRAB12700 (Pyrococcus abyssi (strain GE5 / Orsay)).